A 539-amino-acid polypeptide reads, in one-letter code: Cytochrome P450 monooxygenase buaD (539 aa).

The N-terminal stretch at 1–16 is a signal peptide; it reads MLVPVLTLLGTLTATG. A glycan (N-linked (GlcNAc...) asparagine) is linked at N120. C478 contributes to the heme binding site. N-linked (GlcNAc...) asparagine glycosylation is present at N520.

This sequence belongs to the cytochrome P450 family. Heme is required as a cofactor.

Its pathway is mycotoxin biosynthesis. Cytochrome P450 monooxygenase; part of the gene cluster that mediates the biosynthesis of burnettramic acids, an unusual class of bolaamphiphilic pyrrolizidinediones that display potent antibacterial, antifungal, and cytotoxic activities. The first step of the biosynthesis of burnettramic acids is the hydroxylation of proline by the proline hydroxylase buaE to generate 4-hydroxyproline. The PKS-NRPS buaA and trans-enoyl reductase buaC construct the highly reduced polyketide chain, and the condensation (C) domain of buaA then catalyzes the amide bond formation with the activated 4-hydroxyproline. This is followed by the R domain releasing the nascent polyketide-peptide directly via a Dieckmann condensation to afford a tetramic acid fused to the hydroxyproline, generating the bicyclic pyrrolidinedione moiety. The cytochrome P450 monooxygenases buaD and buaG are likely responsible for the multiple hydroxylations on the polyketide chain and its terminus, although in the heterologous context, buaD does not appear to be required. Therefore, while buaG may be a multifunctional cytochrome P450 monooxygenase, it cannot be ruled out that the two secondary alcohols on the polyketide chain could have an acetate origin. Finally, the glycosyltransferase buaB transfers beta-D-mannose to the aglycone burnettramic acid A to form burnettramic acid A. Burnettramic acid B is a minor cis-pyrrolizidine epimer of burnettramic acid A and it is likely that small amounts of it form naturally in acidic environments. The polypeptide is Cytochrome P450 monooxygenase buaD (Petromyces alliaceus (Aspergillus alliaceus)).